Here is a 154-residue protein sequence, read N- to C-terminus: Small ribosomal subunit protein bS18 (154 aa).

The disordered stretch occupies residues 1–82 (MEKKTTKKAT…PFAKYNRGYP (82 aa)). Positions 8–19 (KATASKTTTTKK) are enriched in low complexity. Positions 20 to 32 (AAAEKTEIKETKK) are enriched in basic and acidic residues. Residues 33–49 (TTTTKTSTAKKATTASV) are compositionally biased toward low complexity. The segment covering 50 to 69 (EKTEVKETKKSSDNKKEFNP) has biased composition (basic and acidic residues).

This sequence belongs to the bacterial ribosomal protein bS18 family. In terms of assembly, part of the 30S ribosomal subunit. Forms a tight heterodimer with protein bS6.

In terms of biological role, binds as a heterodimer with protein bS6 to the central domain of the 16S rRNA, where it helps stabilize the platform of the 30S subunit. This Malacoplasma penetrans (strain HF-2) (Mycoplasma penetrans) protein is Small ribosomal subunit protein bS18.